The following is a 355-amino-acid chain: Erythronate-4-phosphate dehydrogenase (355 aa).

Substrate-binding residues include Ser45 and Thr66. Asp146 serves as a coordination point for NAD(+). The active site involves Arg206. Position 229 (Asp229) interacts with NAD(+). Glu234 is an active-site residue. The active-site Proton donor is the His251. An NAD(+)-binding site is contributed by Gly254. Residue Tyr255 coordinates substrate.

Belongs to the D-isomer specific 2-hydroxyacid dehydrogenase family. PdxB subfamily. Homodimer.

Its subcellular location is the cytoplasm. The catalysed reaction is 4-phospho-D-erythronate + NAD(+) = (R)-3-hydroxy-2-oxo-4-phosphooxybutanoate + NADH + H(+). Its pathway is cofactor biosynthesis; pyridoxine 5'-phosphate biosynthesis; pyridoxine 5'-phosphate from D-erythrose 4-phosphate: step 2/5. Catalyzes the oxidation of erythronate-4-phosphate to 3-hydroxy-2-oxo-4-phosphonooxybutanoate. This chain is Erythronate-4-phosphate dehydrogenase, found in Acinetobacter baylyi (strain ATCC 33305 / BD413 / ADP1).